Reading from the N-terminus, the 362-residue chain is tRNA/tmRNA (uracil-C(5))-methyltransferase (362 aa).

5 residues coordinate S-adenosyl-L-methionine: glutamine 182, tyrosine 210, asparagine 215, glutamate 231, and aspartate 293. The Nucleophile role is filled by cysteine 318. Glutamate 352 serves as the catalytic Proton acceptor.

It belongs to the class I-like SAM-binding methyltransferase superfamily. RNA M5U methyltransferase family. TrmA subfamily.

The enzyme catalyses uridine(54) in tRNA + S-adenosyl-L-methionine = 5-methyluridine(54) in tRNA + S-adenosyl-L-homocysteine + H(+). It carries out the reaction uridine(341) in tmRNA + S-adenosyl-L-methionine = 5-methyluridine(341) in tmRNA + S-adenosyl-L-homocysteine + H(+). Dual-specificity methyltransferase that catalyzes the formation of 5-methyluridine at position 54 (m5U54) in all tRNAs, and that of position 341 (m5U341) in tmRNA (transfer-mRNA). The polypeptide is tRNA/tmRNA (uracil-C(5))-methyltransferase (Neisseria meningitidis serogroup A / serotype 4A (strain DSM 15465 / Z2491)).